Reading from the N-terminus, the 154-residue chain is Terephthalate 1,2-dioxygenase, terminal oxygenase component subunit beta 1 (154 aa).

The protein belongs to the bacterial ring-hydroxylating dioxygenase beta subunit family. Heterotetramer composed of 2 alpha (TphA2I and TphA2II) and 2 beta (TphA3I and TphA3II) subunits. Part of a multicomponent enzyme system composed of a reductase (TphA1I or TphA1II) and a two-subunit oxygenase component (TphA2I or TphA2II and TphA3I or TphA3II). Fe cation serves as cofactor.

It catalyses the reaction terephthalate + NADH + O2 + H(+) = (3S,4R)-3,4-dihydroxycyclohexa-1,5-diene-1,4-dicarboxylate + NAD(+). Inhibited by EDTA. Its function is as follows. Component of the terephthalate 1,2-dioxygenase multicomponent enzyme system which catalyzes the dioxygenation of terephthalate (TER/TPA) to 1,2-dihydroxy-3,5-cyclohexadiene-1,4-dicarboxylic acid (DCD). It can also use 2,5-dicarboxypyridine (PDC) and 1,4-napthalenedicarboxylic acid (NDC) as substrates, and preferentially uses NADPH which is the physiological electron donor. The chain is Terephthalate 1,2-dioxygenase, terminal oxygenase component subunit beta 1 (tphA3I) from Comamonas sp.